The chain runs to 420 residues: MKWGVVAVLATLVVAASAKDYFKETFDGSWADRWTKSSWKVSDGSAGEFKLTAGKWYGDAEADKGIQTGPDSKFFAISAPLATVFDNTGKDTVVQFSVKHEQDLDCGGGYIKVVPATSEKQMGEFGGDTPYSIMFGPDICGYSTRKVHVILTYKGKNYLIKKDIKAETDQLTHVYTLVIKPDNTYQVLIDLKEVASGSLYEDWDMLPPKTIKDPKASKPEDWDEREEIADPEDKKPEGWDDIPATIADKDAKKPEDWDDEEDGTWEPPMIPNPEYKGEWKAKMIKNPAYKGIWVAPDIDNPDYVHDDKLYNFKDLKFVGFELWQVKSGSIFDNILVTDDLEAAKKFAEDTWGKHKDEEKAMFDKVKKEEDEKKAKDAPPPPVDAEAAEEEDDEYEDKEEPSGMGSIKIPKEEEESGHDEL.

The first 18 residues, 1–18 (MKWGVVAVLATLVVAASA), serve as a signal peptide directing secretion. An intrachain disulfide couples cysteine 106 to cysteine 140. The an alpha-D-glucoside site is built by tyrosine 110, lysine 112, tyrosine 131, and aspartate 138. 7 tandem repeats follow at residues 194–205 (VASGSLYEDWDM), 213–224 (DPKASKPEDWDE), 230–241 (DPEDKKPEGWDD), 248–259 (DKDAKKPEDWDD), 263–273 (GTWEPPMIPNP), 277–287 (GEWKAKMIKNP), and 291–301 (GIWVAPDIDNP). Positions 194–259 (VASGSLYEDW…DAKKPEDWDD (66 aa)) are 4 X approximate repeats. Residues 210-220 (TIKDPKASKPE) are compositionally biased toward basic and acidic residues. Residues 210–272 (TIKDPKASKP…GTWEPPMIPN (63 aa)) form a disordered region. A compositionally biased stretch (acidic residues) spans 221–230 (DWDEREEIAD). A 3 X approximate repeats region spans residues 263-301 (GTWEPPMIPNPEYKGEWKAKMIKNPAYKGIWVAPDIDNP). Glutamate 321 contacts an alpha-D-glucoside. The span at 357 to 376 (EEKAMFDKVKKEEDEKKAKD) shows a compositional bias: basic and acidic residues. The tract at residues 357 to 420 (EEKAMFDKVK…EEEESGHDEL (64 aa)) is disordered. 2 stretches are compositionally biased toward acidic residues: residues 385–398 (EAAEEEDDEYEDKE) and 411–420 (EEEESGHDEL). Residues 417–420 (HDEL) carry the Prevents secretion from ER motif.

It belongs to the calreticulin family.

The protein resides in the endoplasmic reticulum lumen. Functionally, molecular calcium-binding chaperone promoting folding, oligomeric assembly and quality control in the ER via the calreticulin/calnexin cycle. This lectin may interact transiently with almost all of the monoglucosylated glycoproteins that are synthesized in the ER. The sequence is that of Calreticulin from Chlamydomonas reinhardtii (Chlamydomonas smithii).